Consider the following 368-residue polypeptide: Ribosomal RNA large subunit methyltransferase M (368 aa).

S-adenosyl-L-methionine is bound by residues S192, 225-228, D244, D264, and D281; that span reads APGG. K310 functions as the Proton acceptor in the catalytic mechanism.

It belongs to the class I-like SAM-binding methyltransferase superfamily. RNA methyltransferase RlmE family. RlmM subfamily. Monomer.

Its subcellular location is the cytoplasm. It carries out the reaction cytidine(2498) in 23S rRNA + S-adenosyl-L-methionine = 2'-O-methylcytidine(2498) in 23S rRNA + S-adenosyl-L-homocysteine + H(+). Catalyzes the 2'-O-methylation at nucleotide C2498 in 23S rRNA. This is Ribosomal RNA large subunit methyltransferase M from Colwellia psychrerythraea (strain 34H / ATCC BAA-681) (Vibrio psychroerythus).